The primary structure comprises 557 residues: Formate--tetrahydrofolate ligase (557 aa).

Position 65–72 (65–72 (TPAGEGKT)) interacts with ATP.

This sequence belongs to the formate--tetrahydrofolate ligase family.

The catalysed reaction is (6S)-5,6,7,8-tetrahydrofolate + formate + ATP = (6R)-10-formyltetrahydrofolate + ADP + phosphate. Its pathway is one-carbon metabolism; tetrahydrofolate interconversion. This is Formate--tetrahydrofolate ligase from Methylorubrum extorquens (strain CM4 / NCIMB 13688) (Methylobacterium extorquens).